A 1188-amino-acid chain; its full sequence is Carboxylic acid reductase (1188 aa).

Residues His-315, Ser-408, 429 to 430, Thr-434, Asp-507, 519 to 522, Lys-528, and Lys-629 contribute to the AMP site; these read DG and YVDR. In terms of domain architecture, Carrier spans 665–743; sequence AGERPVIETV…SVAAHIEKER (79 aa). Ser-702 is modified (O-(pantetheine 4'-phosphoryl)serine). NADP(+) is bound by residues 801 to 804, Arg-828, Arg-838, 868 to 869, 894 to 896, Ser-934, Tyr-970, Lys-974, and Ser-997; these read NGWL, DF, and SGA.

The protein belongs to the ATP-dependent AMP-binding enzyme family. Carboxylic acid reductase subfamily. Requires pantetheine 4'-phosphate as cofactor.

The enzyme catalyses a carboxylate + ATP + NADPH + H(+) = an aldehyde + AMP + diphosphate + NADP(+). Functionally, catalyzes the ATP- and NADPH-dependent reduction of carboxylic acids to the corresponding aldehydes. Catalyzes the reduction of a very wide range of carboxylic acids, including benzoic acids, heterocyclic, phenylacetic, phenylpropanoic and fatty acid substrates. This chain is Carboxylic acid reductase, found in Segniliparus rugosus (strain ATCC BAA-974 / DSM 45345 / CCUG 50838 / CIP 108380 / JCM 13579 / CDC 945).